Reading from the N-terminus, the 47-residue chain is Potassium channel toxin alpha-KTx 7.1 (47 aa).

A signal peptide spans 1-12 (RGSVDYKDDDDK). Cystine bridges form between cysteine 16–cysteine 37, cysteine 22–cysteine 42, and cysteine 26–cysteine 44.

The protein belongs to the short scorpion toxin superfamily. Potassium channel inhibitor family. Alpha-KTx 07 subfamily. Expressed by the venom gland.

Its subcellular location is the secreted. In terms of biological role, potent inhibitor of the A-type voltage-gated potassium channels. Most potent inhibitor of Kv1.2/KCNA2 channels. Reversibly block the Shaker B potassium-channels (Kv1.1 sub-family). The chain is Potassium channel toxin alpha-KTx 7.1 (PTX-1) from Pandinus imperator (Emperor scorpion).